Here is a 242-residue protein sequence, read N- to C-terminus: Small ribosomal subunit protein uS2 (242 aa).

It belongs to the universal ribosomal protein uS2 family.

The chain is Small ribosomal subunit protein uS2 from Photobacterium profundum (strain SS9).